Here is a 241-residue protein sequence, read N- to C-terminus: MEKFAPEFHGEDANTKATKFLESLKGKFTSSKDSRKKDSIISVNSIDIELPKESPITSTNHNINQPSEINDTIAANQVHIRKPLVSFKEELPSSENPFTKLYKETIETFDNNEEESSYSYDEINDQTNDNITARLDRIDEKLSEIIGMLHTLVVASAGPTAARDGIRDAMVGLREEMIEKIRSEALMTNDRLEAMARLRDEESEKMTKDTSDEVKLTPTSEKLNMVLEDESSDNDLSLEDF.

A binding to monomeric RNA-free nucleoprotein region spans residues 1–30; the sequence is MEKFAPEFHGEDANTKATKFLESLKGKFTS. The interval 39-57 is important for viral particle assembly; sequence SIISVNSIDIELPKESPIT. Residues 81–87 are binding to host phosphatase PP1; sequence RKPLVSF. Positions 90–110 are binding to protein M2-1; sequence ELPSSENPFTKLYKETIETFD. Phosphothreonine; by host is present on Thr108. Residues Ser116, Ser117, and Ser119 each carry the phosphoserine; by host modification. The interval 120–160 is oligomerization and binding to RNA-directed RNA polymerase L; the sequence is YDEINDQTNDNITARLDRIDEKLSEIIGMLHTLVVASAGPT. Positions 199–215 are enriched in basic and acidic residues; it reads RDEESEKMTKDTSDEVK. The tract at residues 199–241 is disordered; it reads RDEESEKMTKDTSDEVKLTPTSEKLNMVLEDESSDNDLSLEDF. The binding to RNA-directed RNA polymerase L stretch occupies residues 216 to 232; sequence LTPTSEKLNMVLEDESS. Acidic residues predominate over residues 227–241; that stretch reads LEDESSDNDLSLEDF. Residues Ser232 and Ser237 each carry the phosphoserine; by host modification. A binding to the N-RNA complex region spans residues 232-241; sequence SDNDLSLEDF.

Belongs to the pneumoviridae phosphoprotein P family. As to quaternary structure, homotetramer. Interacts with protein M2-1; the interaction between the two tetramers is required for the anti-termination and elongation transcriptional activities of protein M2-1. Interacts with host phosphatase PP1; this interaction recruits PP1 to the inclusion bodies. Formation of a complex PP1/M2-1/P allows P to target host PP1 phosphatase to the M2-1 substrate. Interacts (via C-terminus) with the nucleoprotein N (via N-terminus); the phosphorylated phosphoprotein P binds to N-RNA complex. Interacts (via N-terminus) with the monomeric RNA-free nucleoprotein N. Interacts (via C-terminus) with RNA-directed RNA polymerase L; the association of P and L forms the polymerase complex. Post-translationally, constitutively phosphorylated by host. Phosphorylation at S-116, S-117, S-119, S-232 and S-237 is required for transcription inhibition by M2-2 and viral particle egress. Phosphorylation at S-232 and S-237 increases the affinity of the binding to the nucleoprotein.

The protein resides in the virion. Its subcellular location is the host cytoplasm. Plays critical roles in regulating RNA replication and transcription through its interactions with multiple proteins. Tethers the RNA-directed RNA polymerase L to the nucleoprotein-RNA complex. Recruits the M2-1 protein, a processivity factor that is required for efficient transcription of viral RNA. Acts as a chaperone for neo-synthesized nucleoprotein by forming an N-P complex that preserves N in a monomeric and RNA-free state and prevents the association of nascent N with host cell RNAs. Recruits the host phosphatase PP1 to inclusion bodies to regulate viral transcription. Together with the nucleoprotein, sequesters host NF-kappa-B in inclusion bodies (IBs) thereby inhibiting this host defense pathway. The sequence is that of Phosphoprotein (P) from Bovine respiratory syncytial virus (strain A51908) (BRS).